A 347-amino-acid chain; its full sequence is Protein RecA (347 aa).

An ATP-binding site is contributed by 65 to 72 (GPESSGKT). The disordered stretch occupies residues 325-347 (KLGISDGDVEETEDAPKSLFDEE). Basic and acidic residues predominate over residues 338–347 (DAPKSLFDEE).

This sequence belongs to the RecA family.

It is found in the cytoplasm. In terms of biological role, can catalyze the hydrolysis of ATP in the presence of single-stranded DNA, the ATP-dependent uptake of single-stranded DNA by duplex DNA, and the ATP-dependent hybridization of homologous single-stranded DNAs. It interacts with LexA causing its activation and leading to its autocatalytic cleavage. In Staphylococcus aureus (strain Mu3 / ATCC 700698), this protein is Protein RecA.